A 196-amino-acid polypeptide reads, in one-letter code: HTH-type transcriptional regulator BetI (196 aa).

The HTH tetR-type domain maps to 8–68 (PIRRSQLIAA…ATMRHLMQAL (61 aa)). Positions 31-50 (SIAYIARLAGVSNGIISHYF) form a DNA-binding region, H-T-H motif.

Its pathway is amine and polyamine biosynthesis; betaine biosynthesis via choline pathway [regulation]. Its function is as follows. Repressor involved in the biosynthesis of the osmoprotectant glycine betaine. It represses transcription of the choline transporter BetT and the genes of BetAB involved in the synthesis of glycine betaine. This chain is HTH-type transcriptional regulator BetI, found in Ectopseudomonas mendocina (strain ymp) (Pseudomonas mendocina).